The following is a 215-amino-acid chain: Probable phosphoglycerate mutase GpmB (215 aa).

Substrate contacts are provided by residues 8–15 (RHGETQWN), 21–22 (QG), Arg-58, Lys-60, 82–85 (ELDM), 104–105 (RR), and 151–152 (GI). The Tele-phosphohistidine intermediate role is filled by His-9. The active-site Proton donor/acceptor is the Glu-82.

It belongs to the phosphoglycerate mutase family. GpmB subfamily.

It carries out the reaction (2R)-2-phosphoglycerate = (2R)-3-phosphoglycerate. The protein operates within carbohydrate degradation; glycolysis; pyruvate from D-glyceraldehyde 3-phosphate: step 3/5. This is Probable phosphoglycerate mutase GpmB from Salmonella paratyphi C (strain RKS4594).